The sequence spans 302 residues: Succinate--CoA ligase [ADP-forming] subunit alpha (302 aa).

CoA contacts are provided by residues 17 to 20 (TGST), lysine 43, and 96 to 98 (ITE). Tyrosine 159 lines the substrate pocket. The active-site Tele-phosphohistidine intermediate is histidine 247.

It belongs to the succinate/malate CoA ligase alpha subunit family. Heterotetramer of two alpha and two beta subunits.

It carries out the reaction succinate + ATP + CoA = succinyl-CoA + ADP + phosphate. The catalysed reaction is GTP + succinate + CoA = succinyl-CoA + GDP + phosphate. It functions in the pathway carbohydrate metabolism; tricarboxylic acid cycle; succinate from succinyl-CoA (ligase route): step 1/1. Succinyl-CoA synthetase functions in the citric acid cycle (TCA), coupling the hydrolysis of succinyl-CoA to the synthesis of either ATP or GTP and thus represents the only step of substrate-level phosphorylation in the TCA. The alpha subunit of the enzyme binds the substrates coenzyme A and phosphate, while succinate binding and nucleotide specificity is provided by the beta subunit. The sequence is that of Succinate--CoA ligase [ADP-forming] subunit alpha from Staphylococcus aureus (strain COL).